The chain runs to 426 residues: Histidine--tRNA ligase (426 aa).

The protein belongs to the class-II aminoacyl-tRNA synthetase family. As to quaternary structure, homodimer.

It is found in the cytoplasm. The catalysed reaction is tRNA(His) + L-histidine + ATP = L-histidyl-tRNA(His) + AMP + diphosphate + H(+). The chain is Histidine--tRNA ligase from Geobacillus kaustophilus (strain HTA426).